Consider the following 182-residue polypeptide: Lipoprotein signal peptidase (182 aa).

Helical transmembrane passes span 15-35, 44-64, 65-85, and 97-117; these read LYIG…FLVI, LEVL…FVFG, AFQD…VFLI, and PWGW…KFFV. Active-site residues include Asp140 and Asp162. The chain crosses the membrane as a helical span at residues 155-175; the sequence is WPAFNVADSCVTIGLTILIFT.

The protein belongs to the peptidase A8 family.

The protein localises to the cell inner membrane. The catalysed reaction is Release of signal peptides from bacterial membrane prolipoproteins. Hydrolyzes -Xaa-Yaa-Zaa-|-(S,diacylglyceryl)Cys-, in which Xaa is hydrophobic (preferably Leu), and Yaa (Ala or Ser) and Zaa (Gly or Ala) have small, neutral side chains.. The protein operates within protein modification; lipoprotein biosynthesis (signal peptide cleavage). This protein specifically catalyzes the removal of signal peptides from prolipoproteins. The chain is Lipoprotein signal peptidase from Leptospira borgpetersenii serovar Hardjo-bovis (strain L550).